A 264-amino-acid chain; its full sequence is MRLIDSTAKISPLAVIEDGAQIGAHVEIGPFCVIGKNVKIDAKTILHSHVVINGHTEIGEQNQIFQFASIGEINQDLKYQGEPTKVVIGDRNSIRESVTIHRGTVQGGGVTRIGNDNLFMINAHIAHDCNISNHCIIANNGTLAGHVRLDDFVIVGGMSAIHQFVIIGSHVMLGGGSMVSQDVPPYVMAQGNHAQPFGVNLEGLKRRGFDKPTMHAIRHVYKLIYRSGKTIEEVLPEIEHIALNEPAIKVYLDFFKHSTRGIIR.

This sequence belongs to the transferase hexapeptide repeat family. LpxA subfamily. In terms of assembly, homotrimer.

It localises to the cytoplasm. The catalysed reaction is a (3R)-hydroxyacyl-[ACP] + UDP-N-acetyl-alpha-D-glucosamine = a UDP-3-O-[(3R)-3-hydroxyacyl]-N-acetyl-alpha-D-glucosamine + holo-[ACP]. It functions in the pathway glycolipid biosynthesis; lipid IV(A) biosynthesis; lipid IV(A) from (3R)-3-hydroxytetradecanoyl-[acyl-carrier-protein] and UDP-N-acetyl-alpha-D-glucosamine: step 1/6. Its function is as follows. Involved in the biosynthesis of lipid A, a phosphorylated glycolipid that anchors the lipopolysaccharide to the outer membrane of the cell. In Haemophilus ducreyi (strain 35000HP / ATCC 700724), this protein is Acyl-[acyl-carrier-protein]--UDP-N-acetylglucosamine O-acyltransferase.